Reading from the N-terminus, the 145-residue chain is Small ribosomal subunit protein uS19 (145 aa).

This sequence belongs to the universal ribosomal protein uS19 family. In terms of assembly, component of the small ribosomal subunit.

The protein resides in the cytoplasm. In terms of biological role, component of the small ribosomal subunit. The ribosome is a large ribonucleoprotein complex responsible for the synthesis of proteins in the cell. The polypeptide is Small ribosomal subunit protein uS19 (rps15) (Xenopus laevis (African clawed frog)).